The sequence spans 1631 residues: ABC transporter A family member 6 (1631 aa).

The next 7 helical transmembrane spans lie at 25-45 (ICCEIVFPIVIIGVLFAILAL), 242-262 (SVFITAALMMFSFRLVTDVVI), 285-305 (SWIITSLITSLPVTLLIVVIF), 317-337 (GIVIITFVLYLITLLLLSFIF), 346-366 (FCGLLSFVIVIAINICGIFVS), 372-392 (VSVKLLLSIFSPIAFSNSIYI), and 416-436 (ILMLGIDIIIYIILIWYFEKV). The region spanning 491–724 (ISIRNLRKEF…FGQGYLLTCN (234 aa)) is the ABC transporter 1 domain. 527-534 (GPNGCGKS) is a binding site for ATP. A run of 7 helical transmembrane segments spans residues 866–886 (SFFLSIILPMALIIGSIILYK), 1047–1067 (AIIYFVFILMAGFSLMAGSFA), 1099–1119 (WDFFFAFIISILSCSILAGVI), 1127–1147 (FGSFLLCLILLSCAIIPLGYL), 1158–1178 (AVGAITAILFVFGLVFTIASL), 1198–1218 (IIDLIFSIISPIFALNRIVFI), and 1242–1262 (LGTPLIVLAGHAVLWNVWILL). One can recognise an ABC transporter 2 domain in the interval 1309–1544 (IQFKNLHKLF…FGAGYSIDVK (236 aa)). Position 1347–1354 (1347–1354 (GLNGGGKS)) interacts with ATP.

This sequence belongs to the ABC transporter superfamily. ABCA family.

It localises to the membrane. This is ABC transporter A family member 6 (abcA6) from Dictyostelium discoideum (Social amoeba).